Here is a 329-residue protein sequence, read N- to C-terminus: Sideroflexin-1.1 (329 aa).

A run of 5 helical transmembrane segments spans residues 100–122, 150–167, 178–198, 232–254, and 274–294; these read MPGN…GVVF, LFVS…VALG, LAAR…NIPM, VTLS…MNRI, and IQTL…CALF.

The protein belongs to the sideroflexin family.

The protein resides in the mitochondrion inner membrane. It catalyses the reaction L-serine(in) = L-serine(out). The enzyme catalyses L-alanine(in) = L-alanine(out). It carries out the reaction L-cysteine(in) = L-cysteine(out). Amino acid transporter importing serine, an essential substrate of the mitochondrial branch of the one-carbon pathway, into mitochondria. Mitochondrial serine is then converted to glycine and formate, which exits to the cytosol where it is used to generate the charged folates that serve as one-carbon donors. May also transport other amino acids including alanine and cysteine. The polypeptide is Sideroflexin-1.1 (Caenorhabditis elegans).